The sequence spans 879 residues: Alanine--tRNA ligase (879 aa).

Zn(2+)-binding residues include His564, His568, Cys666, and His670.

Belongs to the class-II aminoacyl-tRNA synthetase family. Zn(2+) is required as a cofactor.

The protein resides in the cytoplasm. It carries out the reaction tRNA(Ala) + L-alanine + ATP = L-alanyl-tRNA(Ala) + AMP + diphosphate. Functionally, catalyzes the attachment of alanine to tRNA(Ala) in a two-step reaction: alanine is first activated by ATP to form Ala-AMP and then transferred to the acceptor end of tRNA(Ala). Also edits incorrectly charged Ser-tRNA(Ala) and Gly-tRNA(Ala) via its editing domain. The polypeptide is Alanine--tRNA ligase (Crocosphaera subtropica (strain ATCC 51142 / BH68) (Cyanothece sp. (strain ATCC 51142))).